The chain runs to 857 residues: Trehalose transporter 1 (857 aa).

Disordered regions lie at residues 1-28 and 62-202; these read MSGR…KLKE and DPFL…QKAT. Topologically, residues 1–392 are cytoplasmic; the sequence is MSGRDNRGAG…VYRPTTNPIY (392 aa). Position 9 is a phosphothreonine (A9). A Phosphoserine modification is found at G12. The span at 69–81 shows a compositional bias: polar residues; the sequence is VSPQRHPQNTVRT. A compositionally biased stretch (basic and acidic residues) spans 134 to 143; the sequence is EIREHRDRQQ. Over residues 171-181 the composition is skewed to polar residues; sequence GNSNTNSNKAA. Residues S248, S249, and S250 each carry the phosphoserine modification. Disordered stretches follow at residues 249 to 269 and 280 to 299; these read SSEE…HQSL and VLQG…EHKR. Residues S320 and S322 each carry the phosphoserine modification. A disordered region spans residues 327–346; that stretch reads LTSRQHFQQQRSISTDSRKS. Over residues 330-341 the composition is skewed to polar residues; sequence RQHFQQQRSIST. Residues 393 to 413 traverse the membrane as a helical segment; sequence IWTQVLAALSVSLGSLVVGFV. Residues 414–440 are Extracellular-facing; it reads SAYTSPALVSMTDRNITSFEVTQDAGS. An N-linked (GlcNAc...) asparagine glycan is attached at N428. The chain crosses the membrane as a helical span at residues 441 to 461; that stretch reads WVGGIMPLAGLAGGIAGGPLI. Topologically, residues 462 to 473 are cytoplasmic; the sequence is EYLGRRNTILAT. The chain crosses the membrane as a helical span at residues 474 to 494; sequence AVPFIVSSLLIACAVNVAMVL. Residues 495 to 497 lie on the Extracellular side of the membrane; the sequence is CGR. Residues 498–518 traverse the membrane as a helical segment; sequence FLAGFCVGIASLSLPVYLGET. The Cytoplasmic portion of the chain corresponds to 519-528; it reads VQPEVRGTLG. A helical transmembrane segment spans residues 529-549; it reads LLPTAFGNIGILLCFVAGSFM. An N-linked (GlcNAc...) asparagine glycan is attached at N550. The Extracellular segment spans residues 550-552; the sequence is NWS. The helical transmembrane segment at 553–573 threads the bilayer; it reads MLAFLGAALPVPFLILMFLIP. Residues 574–636 lie on the Cytoplasmic side of the membrane; it reads ETPRWFVGRG…ELLKLNNLKP (63 aa). A helical membrane pass occupies residues 637–657; that stretch reads LSISLGLMFFQQFSGINAVIF. Residues 658-673 lie on the Extracellular side of the membrane; it reads YTVQIFKDAGSTIDGN. The helical transmembrane segment at 674–694 threads the bilayer; that stretch reads LCTIIVGIVNFLATFIGIVLI. At 695-700 the chain is on the cytoplasmic side; it reads DRAGRK. The chain crosses the membrane as a helical span at residues 701–721; sequence ILLYVSDIAMVLTLFVLGGFF. Over 722–740 the chain is Extracellular; it reads YCKTYGPDVSHLGWLPLTC. Residues 741–761 form a helical membrane-spanning segment; the sequence is FVIYILGFSLGFGPIPWLMMG. At 762–767 the chain is on the cytoplasmic side; sequence EILPAK. A helical transmembrane segment spans residues 768-788; that stretch reads IRGSAASVATAFNWFCTFVVT. Topologically, residues 789-801 are extracellular; it reads KTFQDLTVAMGAH. Residues 802–822 traverse the membrane as a helical segment; that stretch reads GAFWLFGAICFVGLFFVIIYV. Topologically, residues 823–857 are cytoplasmic; it reads PETQGKTLEDIERKMMGRVRRMSSVANIKPLSFNM. Phosphoserine occurs at positions 845 and 846.

This sequence belongs to the major facilitator superfamily. Sugar transporter (TC 2.A.1.1) family. Trehalose transporter subfamily. As to expression, expressed in perineurial glia of the outer layer of the nervous system that forms the blood brain barrier (at protein level). Expressed in the fat body (at protein level). May be specifically expressed in perineurial glia (at protein level). In terms of tissue distribution, may be specifically expressed in the fat body (at protein level).

It is found in the cell membrane. The protein resides in the vesicle. It catalyses the reaction alpha,alpha-trehalose(in) = alpha,alpha-trehalose(out). The catalysed reaction is D-glucose(out) = D-glucose(in). In terms of biological role, low-capacity facilitative transporter for trehalose. Can also transport glucose. Does not transport maltose, sucrose, lactose or fructose. Mediates the bidirectional transfer of trehalose. Responsible for the transport of trehalose synthesized in the fat body and the incorporation of trehalose into other tissues that require a carbon source, thereby regulating trehalose levels in the hemolymph. Required in glial cells of the blood brain barrier to fuel glycolysis but not required in neurons. Neurons rely on the citric acid cycle for their energy needs and utilise alanine and lactate, by-products of glial cell glycolysis released into the hemolymph, as fuel. Increased expression in glial cells of the blood brain barrier during starvation and increased cell surface localization enhances carbohydrate uptake to protect the central nervous system from restricted nutrient availability. The polypeptide is Trehalose transporter 1 (Drosophila melanogaster (Fruit fly)).